A 77-amino-acid chain; its full sequence is Acyl carrier protein (77 aa).

The Carrier domain occupies Ala-2–Leu-77. O-(pantetheine 4'-phosphoryl)serine is present on Ser-37.

Belongs to the acyl carrier protein (ACP) family. 4'-phosphopantetheine is transferred from CoA to a specific serine of apo-ACP by AcpS. This modification is essential for activity because fatty acids are bound in thioester linkage to the sulfhydryl of the prosthetic group.

The protein resides in the cytoplasm. The protein operates within lipid metabolism; fatty acid biosynthesis. In terms of biological role, carrier of the growing fatty acid chain in fatty acid biosynthesis. The protein is Acyl carrier protein of Bacillus mycoides (strain KBAB4) (Bacillus weihenstephanensis).